Consider the following 524-residue polypeptide: Probable plastidic glucose transporter 1 (524 aa).

Transmembrane regions (helical) follow at residues 88-108, 122-142, 151-171, 179-199, 208-228, 239-259, 320-340, 357-377, 386-406, 420-440, 452-472, and 483-503; these read MANF…VSIA, LVVS…GPLV, FQIF…AHSL, FLVG…ISEV, LGTL…LLGI, TMLY…QFAV, VAFI…NGVL, QASL…SYLI, LIGS…AVGF, GTLM…GLII, IMGF…LFFL, and VYAS…LFTV.

Belongs to the major facilitator superfamily. Sugar transporter (TC 2.A.1.1) family.

The protein localises to the plastid. It localises to the chloroplast membrane. Its function is as follows. May be involved in the efflux of glucose towards the cytosol. The polypeptide is Probable plastidic glucose transporter 1 (Arabidopsis thaliana (Mouse-ear cress)).